We begin with the raw amino-acid sequence, 277 residues long: MTLKKSKPTSPGQRAVVRSVNSFLYKGNSYSALTEKKKKNSGRNNSGKITVRHIGGGHKHHYRIVDFCRNKDDIPAKVERIEYDPNRSAYLALLCYADGERKYIIAAKDIEVGSYVVNGSGSPVKTGNALPIRNIPVGSVIHCIELKPGKGAQLARSAGSSAQLMAREGDYSQIRLRSGEIRKIHINCRATIGEVGNSEHNLQSIGKAGAVRWRGIRPTVRGVAMNPVDHPHGGGEGKTAAGRHPVSPWGTPSKGSRTRRNKRTVNMIVRSRYSKKG.

Residues 223–264 (VAMNPVDHPHGGGEGKTAAGRHPVSPWGTPSKGSRTRRNKRT) form a disordered region.

The protein belongs to the universal ribosomal protein uL2 family. As to quaternary structure, part of the 50S ribosomal subunit. Forms a bridge to the 30S subunit in the 70S ribosome.

One of the primary rRNA binding proteins. Required for association of the 30S and 50S subunits to form the 70S ribosome, for tRNA binding and peptide bond formation. It has been suggested to have peptidyltransferase activity; this is somewhat controversial. Makes several contacts with the 16S rRNA in the 70S ribosome. This is Large ribosomal subunit protein uL2 from Nitrosomonas eutropha (strain DSM 101675 / C91 / Nm57).